A 246-amino-acid polypeptide reads, in one-letter code: UDP-2,3-diacylglucosamine hydrolase (246 aa).

Mn(2+) contacts are provided by D8, H10, D41, N79, and H114. Position 79 to 80 (79 to 80 (NR)) interacts with substrate. Positions 122, 160, 164, 167, and 195 each coordinate substrate. Mn(2+) is bound by residues H195 and H197.

The protein belongs to the LpxH family. Mn(2+) serves as cofactor.

It is found in the cell inner membrane. The catalysed reaction is UDP-2-N,3-O-bis[(3R)-3-hydroxytetradecanoyl]-alpha-D-glucosamine + H2O = 2-N,3-O-bis[(3R)-3-hydroxytetradecanoyl]-alpha-D-glucosaminyl 1-phosphate + UMP + 2 H(+). It participates in glycolipid biosynthesis; lipid IV(A) biosynthesis; lipid IV(A) from (3R)-3-hydroxytetradecanoyl-[acyl-carrier-protein] and UDP-N-acetyl-alpha-D-glucosamine: step 4/6. Functionally, hydrolyzes the pyrophosphate bond of UDP-2,3-diacylglucosamine to yield 2,3-diacylglucosamine 1-phosphate (lipid X) and UMP by catalyzing the attack of water at the alpha-P atom. Involved in the biosynthesis of lipid A, a phosphorylated glycolipid that anchors the lipopolysaccharide to the outer membrane of the cell. The polypeptide is UDP-2,3-diacylglucosamine hydrolase (Chromohalobacter salexigens (strain ATCC BAA-138 / DSM 3043 / CIP 106854 / NCIMB 13768 / 1H11)).